The primary structure comprises 910 residues: Eukaryotic translation initiation factor 3 subunit C (910 aa).

The tract at residues 1-21 (MSRFFANGSESESESSEEEIQ) is disordered. A compositionally biased stretch (acidic residues) spans 11 to 20 (SESESSEEEI). A phosphoserine mark is found at Ser34, Ser165, Ser176, and Ser185. Positions 157-279 (FREAPDQESE…IRKRAEDDED (123 aa)) are disordered. Over residues 162-186 (DQESEAEDEVVALESDGGDAGDDSD) the composition is skewed to acidic residues. Low complexity predominate over residues 194–207 (AVPKAVKSAPAKAA). A compositionally biased stretch (acidic residues) spans 209–235 (ADDDDSDDSIDWDSDSESETESSDDEN). A compositionally biased stretch (basic and acidic residues) spans 240–268 (MRERFLKRTTEKEEKDDDKRKDKRKEQKT). In terms of domain architecture, PCI spans 639-815 (FHMHINLELL…ETVGMHRSEP (177 aa)). Residues 847–910 (FFQRGNMGNR…QQQVQTIDEE (64 aa)) form a disordered region. Low complexity predominate over residues 862–874 (NRNQNNQGGNWLG). The segment covering 882–891 (RNRNQRGHHK) has biased composition (basic residues). The span at 895-910 (DRQQQQQQQVQTIDEE) shows a compositional bias: low complexity.

It belongs to the eIF-3 subunit C family. Component of the eukaryotic translation initiation factor 3 (eIF-3) complex. The eIF-3 complex interacts with pix.

Its subcellular location is the cytoplasm. Component of the eukaryotic translation initiation factor 3 (eIF-3) complex, which is involved in protein synthesis of a specialized repertoire of mRNAs and, together with other initiation factors, stimulates binding of mRNA and methionyl-tRNAi to the 40S ribosome. The eIF-3 complex specifically targets and initiates translation of a subset of mRNAs involved in cell proliferation. This Drosophila melanogaster (Fruit fly) protein is Eukaryotic translation initiation factor 3 subunit C.